A 113-amino-acid polypeptide reads, in one-letter code: Iron-sulfur cluster insertion protein ErpA (113 aa).

Cysteine 41, cysteine 105, and cysteine 107 together coordinate iron-sulfur cluster.

Belongs to the HesB/IscA family. In terms of assembly, homodimer. It depends on iron-sulfur cluster as a cofactor.

Functionally, required for insertion of 4Fe-4S clusters for at least IspG. This chain is Iron-sulfur cluster insertion protein ErpA, found in Mannheimia succiniciproducens (strain KCTC 0769BP / MBEL55E).